The primary structure comprises 170 residues: Protein Rex (170 aa).

Residues 1–16 (MPKTRRQRTRRARRNR) show a composition bias toward basic residues. Disordered stretches follow at residues 1–27 (MPKTRRQRTRRARRNRPPTPWPISQDL) and 69–170 (VQST…GEKP). The Nuclear localization signal, and RNA-binding (RxRE) motif lies at 2-19 (PKTRRQRTRRARRNRPPT). Residues 57 to 71 (PPAYIDMPSWPPVQS) are homomultimerization. Residues 82–95 (ALSALLSNTLSLAS) are compositionally biased toward low complexity. The Nuclear export signal signature appears at 83–94 (LSALLSNTLSLA). The segment at 124–132 (PSFNQCEST) is homomultimerization. Residues 143–160 (PSGISSPPSPSPNLASVP) are compositionally biased toward low complexity. 2 positions are modified to phosphoserine; by host: serine 151 and serine 153. Positions 161–170 (KTSTPPGEKP) are enriched in polar residues.

The protein belongs to the deltaretrovirus Rex protein family. Homomultimer. Post-translationally, phosphorylation is essential for RNA-binding and function.

The protein resides in the host nucleus. The protein localises to the host nucleolus. It localises to the host cytoplasm. In terms of biological role, rex escorts unspliced gag-pro-pol and singly spliced env mRNAs out of the nucleus of infected cells. These mRNAs carry a recognition sequence called Rex responsive element (RxRE or XRE) located at the 3' region of the long terminal repeat (LTR). This function is essential since most HTLV proteins are translated from unspliced or partially spliced pre-mRNAs that cannot exit the nucleus by the pathway used by fully processed cellular mRNAs. In Human T-cell leukemia virus 2 (HTLV-2), this protein is Protein Rex.